We begin with the raw amino-acid sequence, 466 residues long: SVGFKAGVKDYKLTYYTPDYETKDTDILAAFRVTPQPGVPPEEAGAAVAAESSTGTWTTVWTDGLTSLDRYKGRCYDIEPVAGEENQYIAYVAYPLDLFEEGSVTNMFTSIVGNVFGFKALRALRLEDLRIPPAYSKTFQGPPHGIQVERDKLNKYGRPLLGCTIKPKLGLSAKNYGRAVYECLRGGLDFTKDDENVNSQPFMRWRDRFLFCAEALYKAQAETGEIKGHYLNATAGTCEEMIKRAVFARELGVPIVMHDYLTGGFTANTSLAHYCRDNGLLLHIHRAMHAVIDRQKNHGIHFRVLAKALRMSGGDHIHSGTVVGKLEGERDITLGFVDLLRDDFIEKDRSRGIYFTQDWVSLPGVLPVASGGIHVWHMPALTEIFGDDSVLQFGGGTLGHPWGNAPGAVANRVALEACVQARNEGRDLAREGNEIIREASKWSPELAAACEVWKEIKFEFQAMDTL.

Lys5 bears the N6,N6,N6-trimethyllysine mark. 2 residues coordinate substrate: Asn114 and Thr164. The Proton acceptor role is filled by Lys166. Lys168 contacts substrate. Residues Lys192, Asp194, and Glu195 each coordinate Mg(2+). An N6-carboxylysine modification is found at Lys192. His285 serves as the catalytic Proton acceptor. Substrate is bound by residues Arg286, His318, and Ser370.

It belongs to the RuBisCO large chain family. Type I subfamily. As to quaternary structure, heterohexadecamer of 8 large chains and 8 small chains; disulfide-linked. The disulfide link is formed within the large subunit homodimers. Mg(2+) serves as cofactor. Post-translationally, the disulfide bond which can form in the large chain dimeric partners within the hexadecamer appears to be associated with oxidative stress and protein turnover.

The protein localises to the plastid. It is found in the chloroplast. The enzyme catalyses 2 (2R)-3-phosphoglycerate + 2 H(+) = D-ribulose 1,5-bisphosphate + CO2 + H2O. It carries out the reaction D-ribulose 1,5-bisphosphate + O2 = 2-phosphoglycolate + (2R)-3-phosphoglycerate + 2 H(+). In terms of biological role, ruBisCO catalyzes two reactions: the carboxylation of D-ribulose 1,5-bisphosphate, the primary event in carbon dioxide fixation, as well as the oxidative fragmentation of the pentose substrate in the photorespiration process. Both reactions occur simultaneously and in competition at the same active site. The chain is Ribulose bisphosphate carboxylase large chain from Poliothyrsis sinensis (Chinese pearlbloom tree).